A 611-amino-acid chain; its full sequence is Chaperonin 60 subunit beta 4, chloroplastic (611 aa).

A chloroplast-targeting transit peptide spans 1-37 (MAFSQAALSALPLSDRTFRKKPSSSSSSSPNFVLRVR). Positions 377 to 480 (QKAVDERVSQ…LDNTEQKIGA (104 aa)) form a coiled coil. Positions 574–595 (INPPLPTSSPATSSMFPDRKLP) are disordered.

The protein belongs to the chaperonin (HSP60) family. In terms of assembly, part of the Cpn60 complex composed of 7 alpha and 7 beta subunits. Can also form a complex composed of 14 beta subunits only. Both complexes show ATPase activity. The Cpn60 complex interacts with the Cpn10 complex. Interacts with NDHH.

The protein localises to the plastid. It localises to the chloroplast stroma. In terms of biological role, involved specifically in the folding of NDHH, a subunit of the chloroplast NADH dehydrogenase-like complex (NDH). This is Chaperonin 60 subunit beta 4, chloroplastic (CPN60B4) from Arabidopsis thaliana (Mouse-ear cress).